The sequence spans 282 residues: U1 small nuclear ribonucleoprotein A (282 aa).

Alanine 2 bears the N-acetylalanine mark. The 80-residue stretch at 10–89 (HTIYINNLNE…KPMRIQYAKT (80 aa)) folds into the RRM 1 domain. At lysine 60 the chain carries N6-acetyllysine. Residues 101–141 (FVERDRKREKRKPKSQETPAAKKAVQGGAAAPVVGTVQGPV) form a disordered region. The span at 119–141 (PAAKKAVQGGAAAPVVGTVQGPV) shows a compositional bias: low complexity. Arginine 152 is modified (omega-N-methylarginine). Residues 208–282 (HILFLTNLPE…NAMKISFAKK (75 aa)) form the RRM 2 domain.

It belongs to the RRM U1 A/B'' family. U1 snRNP is composed of the 7 core Sm proteins SNRPB, SNRPD1, SNRPD2, SNRPD3, SNRPE, SNRPF and SNRPG that assemble in a heptameric protein ring on the Sm site of the small nuclear RNA to form the core snRNP, and at least three U1 snRNP-specific proteins SNRNP70/U1-70K, SNRPA/U1-A and SNRPC/U1-C. Interacts with SFPQ; component of a snRNP-free complex with SFPQ.

The protein localises to the nucleus. Functionally, component of the spliceosomal U1 snRNP, which is essential for recognition of the pre-mRNA 5' splice-site and the subsequent assembly of the spliceosome. U1 snRNP is the first snRNP to interact with pre-mRNA. This interaction is required for the subsequent binding of U2 snRNP and the U4/U6/U5 tri-snRNP. SNRPA binds stem loop II of U1 snRNA. In a snRNP-free form (SF-A) may be involved in coupled pre-mRNA splicing and polyadenylation process. May bind preferentially to the 5'-UGCAC-3' motif on RNAs. The sequence is that of U1 small nuclear ribonucleoprotein A (SNRPA) from Bos taurus (Bovine).